An 84-amino-acid chain; its full sequence is Putative antitoxin VapB7 (84 aa).

Functionally, antitoxin component of a possible type II toxin-antitoxin (TA) system. The cognate toxin is VapC7. The sequence is that of Putative antitoxin VapB7 (vapB7) from Mycobacterium tuberculosis (strain ATCC 25618 / H37Rv).